The sequence spans 88 residues: Large ribosomal subunit protein bL31B (88 aa).

The protein belongs to the bacterial ribosomal protein bL31 family. Type B subfamily. As to quaternary structure, part of the 50S ribosomal subunit.

The protein is Large ribosomal subunit protein bL31B of Corynebacterium efficiens (strain DSM 44549 / YS-314 / AJ 12310 / JCM 11189 / NBRC 100395).